Reading from the N-terminus, the 83-residue chain is ATP synthase subunit c (83 aa).

2 helical membrane-spanning segments follow: residues 10-30 (IAVA…FGLL) and 52-72 (MFIV…IALF).

This sequence belongs to the ATPase C chain family. In terms of assembly, F-type ATPases have 2 components, F(1) - the catalytic core - and F(0) - the membrane proton channel. F(1) has five subunits: alpha(3), beta(3), gamma(1), delta(1), epsilon(1). F(0) has three main subunits: a(1), b(2) and c(10-14). The alpha and beta chains form an alternating ring which encloses part of the gamma chain. F(1) is attached to F(0) by a central stalk formed by the gamma and epsilon chains, while a peripheral stalk is formed by the delta and b chains.

It is found in the cell inner membrane. F(1)F(0) ATP synthase produces ATP from ADP in the presence of a proton or sodium gradient. F-type ATPases consist of two structural domains, F(1) containing the extramembraneous catalytic core and F(0) containing the membrane proton channel, linked together by a central stalk and a peripheral stalk. During catalysis, ATP synthesis in the catalytic domain of F(1) is coupled via a rotary mechanism of the central stalk subunits to proton translocation. In terms of biological role, key component of the F(0) channel; it plays a direct role in translocation across the membrane. A homomeric c-ring of between 10-14 subunits forms the central stalk rotor element with the F(1) delta and epsilon subunits. This is ATP synthase subunit c from Shewanella baltica (strain OS223).